The primary structure comprises 83 residues: Hainantoxin-III (83 aa).

The N-terminal stretch at 1 to 21 is a signal peptide; the sequence is MKASMFLALAGLVLLFVVGYA. A propeptide spanning residues 22–48 is cleaved from the precursor; sequence SESEEKEFPRELLSKIFALDDFKGEER. Disulfide bonds link cysteine 50-cysteine 65, cysteine 57-cysteine 70, and cysteine 64-cysteine 77. Leucine 81 is modified (leucine amide).

Belongs to the neurotoxin 10 (Hwtx-1) family. 15 (Hntx-3) subfamily. As to quaternary structure, monomer. In terms of tissue distribution, expressed by the venom gland.

It is found in the secreted. Its function is as follows. Selective antagonist of neuronal tetrodotoxin (TTX)-sensitive voltage-gated sodium channels (IC(50)=1270 nM on Nav1.1/SCN1A, 270 nM on Nav1.2/SCN2A, 491 nM on Nav1.3/SCN3A and 232 nM on Nav1.7/SCN9A). This toxin suppress Nav1.7 current amplitude without significantly altering the activation, inactivation, and repriming kinetics. Short extreme depolarizations partially activate the toxin-bound channel, indicating voltage-dependent inhibition of this toxin. This toxin increases the deactivation of the Nav1.7 current after extreme depolarizations. The toxin-Nav1.7 complex is gradually dissociated upon prolonged strong depolarizations in a voltage-dependent manner, and the unbound toxin rebinds to Nav1.7 after a long repolarization. Moreover, analysis of chimeric channels showed that the DIIS3-S4 linker is critical for toxin binding to Nav1.7. These data are consistent with this toxin interacting with Nav1.7 site 4 and trapping the domain II voltage sensor in the closed state. The sequence is that of Hainantoxin-III from Cyriopagopus hainanus (Chinese bird spider).